The chain runs to 250 residues: Agamous-like MADS-box protein AGL9 homolog (250 aa).

Positions 3 to 57 (RGRVELKMIENKINRQVTFAKRRKRLLKKAYELSVLCDAEVALIIFSNRGKLYEF) constitute an MADS-box domain. The K-box domain occupies 87-177 (TQSSQQEYLK…KRRFEESSQA (91 aa)).

As to expression, expressed in petals and weakly in sepals but not in the column (gynostemium).

Its subcellular location is the nucleus. Its function is as follows. Probable transcription factor active in inflorescence development and floral organogenesis. In Aranda deborah (Orchid), this protein is Agamous-like MADS-box protein AGL9 homolog.